The primary structure comprises 154 residues: LRRKPGMDRSDLFNVNAGIVRNLVEQIAVTCPKACIGIITNPVNTTVAIAAEVLKKAGVYDKNKLFGVTTLDIIRSNTFVAELKGKQPQDINVPVIGGHSGVTILPLLSQVPGISFSEQEVADLTKRIQNAGTEVVEAKAGGGSATLSMGQVPG.

Substrate is bound by residues R3 and R9. Residues N16 and 39–41 (ITN) each bind NAD(+). Residues N41 and R75 each contribute to the substrate site. H99 serves as the catalytic Proton acceptor. NAD(+) is bound at residue M149.

Belongs to the LDH/MDH superfamily. MDH type 1 family. Homodimer.

It carries out the reaction (S)-malate + NAD(+) = oxaloacetate + NADH + H(+). In terms of biological role, catalyzes the reversible oxidation of malate to oxaloacetate. This chain is Malate dehydrogenase (mdh), found in Pectobacterium carotovorum subsp. carotovorum (Erwinia carotovora subsp. carotovora).